Reading from the N-terminus, the 203-residue chain is MPTIDIESAIWNSGYENIACCDEVGRGCLFGSVLAAAVIMPKDVIIDGVKDSKKLSHKKREQLYEIIKEKSLAIGVGTVSSEIIDKINIKNATRLAMKKAILSLKDKDGNIVAPDYILIDAEEIDVPTPQSAVIKGDDLCHGIAAASIVAKVLRDRLCQRWEEEHPNYGIGQNKGYGTKAHREALKEHGPSPMHRKSFLNKIL.

The region spanning 16–203 (ENIACCDEVG…HRKSFLNKIL (188 aa)) is the RNase H type-2 domain. Aspartate 22, glutamate 23, and aspartate 120 together coordinate a divalent metal cation.

Belongs to the RNase HII family. It depends on Mn(2+) as a cofactor. Mg(2+) serves as cofactor.

Its subcellular location is the cytoplasm. It carries out the reaction Endonucleolytic cleavage to 5'-phosphomonoester.. Functionally, endonuclease that specifically degrades the RNA of RNA-DNA hybrids. This chain is Ribonuclease HII, found in Alkaliphilus oremlandii (strain OhILAs) (Clostridium oremlandii (strain OhILAs)).